The primary structure comprises 391 residues: Paired box protein Pax-5 (391 aa).

A DNA-binding region (paired) is located at residues 16–142; sequence GHGGVNQLGG…SSINRIIRTK (127 aa). The tract at residues 19–75 is PAI subdomain; it reads GVNQLGGVFVNGRPLPDVVRQRIVELAHQGVRPCDISRQLRVSHGCVSKILGRYYET. Residues 94 to 142 are RED subdomain; it reads KVVEKIAEYKRQNPTMFAWEIRDRLLAERVCDNDTVPSVSSINRIIRTK. The segment at 182–218 is disordered; the sequence is SGILGITSPSADTNKRKRDEGIQESPVPNGHSLPGRD.

In terms of assembly, interacts with ETS1; this interaction alters PAX5 DNA-binding properties. Binds DNA as a monomer. Interacts with TBP; this interaction allows PAX5 to interact with the basal transcription machinery. Interacts with RB1. Interacts with TLE4. Interacts with DAXX. Post-translationally, O-glycosylated. In terms of processing, phosphorylated by SYK. This phosphorylation plays an important role in the abolition of BLIMP1 repression by PAX5 in order to trigger plasma cell differentiation. As to expression, expressed in all B-lymphoid organs, in the embryonic midbrain and in adult testis.

The protein localises to the nucleus. Transcription factor that plays an essential role in commitment of lymphoid progenitors to the B-lymphocyte lineage. Fulfills a dual role by repressing B-lineage inappropriate genes and simultaneously activating B-lineage-specific genes. In turn, regulates cell adhesion and migration, induces V(H)-to-D(H)J(H) recombination, facilitates pre-B-cell receptor signaling and promotes development to the mature B-cell stage. Repression of the cohesin-release factor WAPL causes global changes of the chromosomal architecture in pro-B cells to facilitate the generation of a diverse antibody repertoire. The chain is Paired box protein Pax-5 (Pax5) from Mus musculus (Mouse).